Here is a 234-residue protein sequence, read N- to C-terminus: Small ribosomal subunit protein uS3 (234 aa).

The KH type-2 domain maps to 39–107; the sequence is IRKFLKKELY…EVSINIKEVK (69 aa).

Belongs to the universal ribosomal protein uS3 family. Part of the 30S ribosomal subunit. Forms a tight complex with proteins S10 and S14.

In terms of biological role, binds the lower part of the 30S subunit head. Binds mRNA in the 70S ribosome, positioning it for translation. The polypeptide is Small ribosomal subunit protein uS3 (Helicobacter pylori (strain G27)).